Here is a 509-residue protein sequence, read N- to C-terminus: Sensor histidine kinase TrcS (509 aa).

2 consecutive transmembrane segments (helical) span residues 24–44 and 188–208; these read LLLG…VVSV and VALV…VVGY. The region spanning 207–269 is the HAMP domain; that stretch reads GYALRPLRRV…LLDNVDGALA (63 aa). The region spanning 284-502 is the Histidine kinase domain; the sequence is DASHELRTPL…VFRVRLPMIE (219 aa). Histidine 287 is modified (phosphohistidine; by autocatalysis).

It depends on a divalent metal cation as a cofactor. Post-translationally, autophosphorylated.

It is found in the cell membrane. The catalysed reaction is ATP + protein L-histidine = ADP + protein N-phospho-L-histidine.. Member of the two-component regulatory system TrcS/TrcR. Phosphorylates TrcR. The TrcR-TrcS regulatory system may act as a transition regulatory system involved in adapting to an intracellular environment and transitioning from latency to reactivation. This Mycobacterium tuberculosis (strain ATCC 25618 / H37Rv) protein is Sensor histidine kinase TrcS.